The following is a 116-amino-acid chain: Ly-6/neurotoxin-like protein 1 (116 aa).

The signal sequence occupies residues 1 to 20 (MTHLLTVFLVALMGLPVAQA). The UPAR/Ly6 domain maps to 21 to 104 (LECHVCAYNG…GFATPVTLAL (84 aa)). 5 cysteine pairs are disulfide-bonded: Cys-23–Cys-46, Cys-26–Cys-33, Cys-39–Cys-64, Cys-68–Cys-85, and Cys-86–Cys-91. Asn-92 is lipidated: GPI-anchor amidated asparagine. A propeptide spans 93–116 (GAGFATPVTLALVPALLATFWSLL) (removed in mature form).

As to quaternary structure, interacts with nAChRs containing alpha-4:beta-2 (CHRNA4:CHRNB2) and alpha-7 (CHRNA7) subunits. Interacts with CHRNA4 probably in the endoplasmic reticulum prior to nAChR pentameric assembly. Interacts with KCNA2/Potassium voltage-gated channel subfamily A member 2. Expressed in neurons of multiple regions in the CNS, including the cerebral cortex, thalamus, substantia nigra, cerebellum, amygdala and hippocampus. Also expressed in kidney, heart and thymus, but at lower levels than in the brain. Expressed in the primary visual cortex (V1) and the lateral geniculate nucleus (at protein level).

The protein localises to the cell membrane. It is found in the cell projection. It localises to the dendrite. The protein resides in the endoplasmic reticulum. In terms of biological role, acts in different tissues through interaction to nicotinic acetylcholine receptors (nAChRs). The proposed role as modulator of nAChR activity seems to be dependent on the nAChR subtype and stoichiometry, and to involve an effect on nAChR trafficking and its cell surface expression, and on single channel properties of the nAChR inserted in the plasma membrane. Modulates functional properties of nicotinic acetylcholine receptors (nAChRs) to prevent excessive excitation, and hence neurodegeneration. Enhances desensitization by increasing both the rate and extent of desensitization of alpha-4:beta-2-containing nAChRs and slowing recovery from desensitization. Promotes large amplitude ACh-evoked currents through alpha-4:beta-2 nAChRs. Is involved in regulation of the nAChR pentameric assembly in the endoplasmic reticulum. Shifts stoichiometry from high sensitivity alpha-4(2):beta-2(3) to low sensitivity alpha-4(3):beta-2(2) nAChR. In vitro modulates alpha-3:beta-4-containing nAChRs. Reduces cell surface expression of (alpha-3:beta-4)(2):beta-4 and (alpha-3:beta-4)(2):alpha-5 nAChRs suggesting an interaction with nAChR alpha-3(-):(+)beta-4 subunit interfaces and an allosteric mode. Corresponding single channel effects characterized by decreased unitary conductance, altered burst proportions and enhanced desensitization/inactivation seem to depend on nAChR alpha:alpha subunit interfaces and are greater in (alpha-3:beta-2)(2):alpha-3 when compared to (alpha-3:beta-2)(2):alpha-5 nAChRs. Prevents plasticity in the primary visual cortex late in life. The sequence is that of Ly-6/neurotoxin-like protein 1 from Mus musculus (Mouse).